The following is a 174-amino-acid chain: Small ribosomal subunit protein uS5c (174 aa).

The region spanning 17 to 80 (WEERVVQVKR…TDAKKHLVTV (64 aa)) is the S5 DRBM domain.

This sequence belongs to the universal ribosomal protein uS5 family. As to quaternary structure, part of the 30S ribosomal subunit. Contacts protein S4.

The protein resides in the plastid. The protein localises to the chloroplast. Functionally, with S4 and S12 plays an important role in translational accuracy. The sequence is that of Small ribosomal subunit protein uS5c (rps5) from Porphyra purpurea (Red seaweed).